A 312-amino-acid polypeptide reads, in one-letter code: MTGNNQTLILEFLLLGLPIPSEYHLLFYALFLAMYLTIILGNLLIIVLVRLDSHLHMPMYLFLSNLSFSDLCFSSVTMPKLLQNMQSQVPSISYTGCLTQLYFFMVFGDMESFLLVVMAYDRYVAICFPLRYTTIMSTKFCASLVLLLWMLTMTHALLHTLLIARLSFCEKNVILHFFCDISALLKLSCSDIYVNELMIYILGGLIIIIPFLLIVMSYVRIFFSILKFPSIQDIYKVFSTCGSHLSVVTLFYGTIFGIYLCPSGNNSTVKEIAMAMMYTVVTPMLNPFIYSLRNRDMKRALIRVICTKKISL.

Topologically, residues 1 to 25 (MTGNNQTLILEFLLLGLPIPSEYHL) are extracellular. An N-linked (GlcNAc...) asparagine glycan is attached at asparagine 5. A helical transmembrane segment spans residues 26 to 49 (LFYALFLAMYLTIILGNLLIIVLV). The Cytoplasmic segment spans residues 50 to 57 (RLDSHLHM). A helical membrane pass occupies residues 58–79 (PMYLFLSNLSFSDLCFSSVTMP). Topologically, residues 80–100 (KLLQNMQSQVPSISYTGCLTQ) are extracellular. Cysteine 97 and cysteine 189 are disulfide-bonded. The chain crosses the membrane as a helical span at residues 101-120 (LYFFMVFGDMESFLLVVMAY). Residues 121 to 139 (DRYVAICFPLRYTTIMSTK) are Cytoplasmic-facing. The chain crosses the membrane as a helical span at residues 140–158 (FCASLVLLLWMLTMTHALL). At 159–196 (HTLLIARLSFCEKNVILHFFCDISALLKLSCSDIYVNE) the chain is on the extracellular side. Residues 197–219 (LMIYILGGLIIIIPFLLIVMSYV) form a helical membrane-spanning segment. Residues 220 to 236 (RIFFSILKFPSIQDIYK) are Cytoplasmic-facing. Residues 237–260 (VFSTCGSHLSVVTLFYGTIFGIYL) traverse the membrane as a helical segment. Over 261 to 272 (CPSGNNSTVKEI) the chain is Extracellular. Residues 273 to 292 (AMAMMYTVVTPMLNPFIYSL) form a helical membrane-spanning segment. Residues 293 to 312 (RNRDMKRALIRVICTKKISL) lie on the Cytoplasmic side of the membrane.

This sequence belongs to the G-protein coupled receptor 1 family. In terms of tissue distribution, olfactory epithelium.

It is found in the cell membrane. Functionally, odorant receptor. This chain is Olfactory receptor 1500 (Olr1500), found in Rattus norvegicus (Rat).